A 340-amino-acid chain; its full sequence is Protein-glutamate methylesterase/protein-glutamine glutaminase 1 (340 aa).

The Response regulatory domain occupies 5 to 122 (KLFIVDDSAL…KVVSELKEKI (118 aa)). D56 is modified (4-aspartylphosphate). In terms of domain architecture, CheB-type methylesterase spans 148–340 (GKNGRQLVVI…AIAEEIAANI (193 aa)). Active-site residues include S160, H187, and D285.

Belongs to the CheB family. Post-translationally, phosphorylated by CheA. Phosphorylation of the N-terminal regulatory domain activates the methylesterase activity.

The protein localises to the cytoplasm. It catalyses the reaction [protein]-L-glutamate 5-O-methyl ester + H2O = L-glutamyl-[protein] + methanol + H(+). It carries out the reaction L-glutaminyl-[protein] + H2O = L-glutamyl-[protein] + NH4(+). Involved in chemotaxis. Part of a chemotaxis signal transduction system that modulates chemotaxis in response to various stimuli. Catalyzes the demethylation of specific methylglutamate residues introduced into the chemoreceptors (methyl-accepting chemotaxis proteins or MCP) by CheR. Also mediates the irreversible deamidation of specific glutamine residues to glutamic acid. The polypeptide is Protein-glutamate methylesterase/protein-glutamine glutaminase 1 (Carboxydothermus hydrogenoformans (strain ATCC BAA-161 / DSM 6008 / Z-2901)).